The chain runs to 274 residues: Undecaprenyl-diphosphatase (274 aa).

Helical transmembrane passes span 1-21 (MDWL…FLPI), 42-62 (VKDT…LVYY), 81-101 (LWLG…LFGD), 107-127 (LFRP…MWLL), 142-162 (ISAG…LWPG), 184-204 (TKFS…LDFI), 213-233 (IGVV…YFAI), and 248-268 (FAVY…RGVL).

It belongs to the UppP family.

The protein localises to the cell membrane. The catalysed reaction is di-trans,octa-cis-undecaprenyl diphosphate + H2O = di-trans,octa-cis-undecaprenyl phosphate + phosphate + H(+). Its function is as follows. Catalyzes the dephosphorylation of undecaprenyl diphosphate (UPP). Confers resistance to bacitracin. The protein is Undecaprenyl-diphosphatase of Deinococcus radiodurans (strain ATCC 13939 / DSM 20539 / JCM 16871 / CCUG 27074 / LMG 4051 / NBRC 15346 / NCIMB 9279 / VKM B-1422 / R1).